Reading from the N-terminus, the 210-residue chain is Imidazole glycerol phosphate synthase subunit HisH 1 (210 aa).

In terms of domain architecture, Glutamine amidotransferase type-1 spans 3–210; that stretch reads KIAIVDYGMC…LDNFLSFSNV (208 aa). Cys82 functions as the Nucleophile in the catalytic mechanism. Active-site residues include His189 and Glu191.

Heterodimer of HisH and HisF.

The protein localises to the cytoplasm. It catalyses the reaction 5-[(5-phospho-1-deoxy-D-ribulos-1-ylimino)methylamino]-1-(5-phospho-beta-D-ribosyl)imidazole-4-carboxamide + L-glutamine = D-erythro-1-(imidazol-4-yl)glycerol 3-phosphate + 5-amino-1-(5-phospho-beta-D-ribosyl)imidazole-4-carboxamide + L-glutamate + H(+). It carries out the reaction L-glutamine + H2O = L-glutamate + NH4(+). The protein operates within amino-acid biosynthesis; L-histidine biosynthesis; L-histidine from 5-phospho-alpha-D-ribose 1-diphosphate: step 5/9. Functionally, IGPS catalyzes the conversion of PRFAR and glutamine to IGP, AICAR and glutamate. The HisH subunit provides the glutamine amidotransferase activity that produces the ammonia necessary to HisF for the synthesis of IGP and AICAR. This is Imidazole glycerol phosphate synthase subunit HisH 1 (hisH1) from Parasynechococcus marenigrum (strain WH8102).